A 674-amino-acid polypeptide reads, in one-letter code: Protein asunder (674 aa).

Residues 516–538 (HKAKDQYRLLYRELEQLIQLNAS) adopt a coiled-coil conformation. Residues 601–607 (LKASKRR) carry the Nuclear localization signal (NLS) motif.

The protein belongs to the Integrator subunit 13 family. As to quaternary structure, belongs to the multiprotein complex Integrator, at least composed of IntS1, IntS2, IntS3, IntS4, omd/IntS5, IntS6, defl/IntS7, IntS8, IntS9, IntS10, IntS11, IntS12, asun/IntS13, IntS14 and IntS15. The core complex associates with protein phosphatase 2A subunits mts/PP2A and Pp2A-29B, to form the Integrator-PP2A (INTAC) complex. Phosphorylated.

It is found in the nucleus. The protein localises to the cytoplasm. Its subcellular location is the perinuclear region. Component of the integrator complex, a multiprotein complex that terminates RNA polymerase II (Pol II) transcription in the promoter-proximal region of genes. The integrator complex provides a quality checkpoint during transcription elongation by driving premature transcription termination of transcripts that are unfavorably configured for transcriptional elongation: the complex terminates transcription by (1) catalyzing dephosphorylation of the C-terminal domain (CTD) of Pol II subunit Polr2A/Rbp1 and Spt5, and (2) degrading the exiting nascent RNA transcript via endonuclease activity. The integrator complex is also involved in the 3'-end processing of the U7 snRNA, and also the spliceosomal snRNAs U1, U2, U4 and U5. This chain is Protein asunder (asun), found in Drosophila persimilis (Fruit fly).